The chain runs to 399 residues: Mitochondrial glycine transporter (399 aa).

Solcar repeat units follow at residues 35 to 137 (IPPY…LRSV), 164 to 251 (LSTT…CKTN), and 266 to 374 (GNWM…GRSW). A run of 6 helical transmembrane segments spans residues 41–66 (LAFG…TRLQ), 112–138 (GTAP…RSVA), 170–195 (LLTG…ARFE), 226–249 (GFTA…EACK), 270–296 (VVSA…KTRM), and 349–367 (GLGL…GWSI). Residues 379–399 (EASSSAQEAGTGTRLLDHKQV) are disordered.

The protein belongs to the mitochondrial carrier (TC 2.A.29) family. SLC25A38 subfamily.

It localises to the mitochondrion inner membrane. It catalyses the reaction glycine(in) = glycine(out). Mitochondrial glycine transporter that imports glycine into the mitochondrial matrix. Plays an important role in providing glycine for the first enzymatic step in heme biosynthesis, the condensation of glycine with succinyl-CoA to produce 5-aminolevulinate (ALA) in the mitochondrial matrix. This Mycosarcoma maydis (Corn smut fungus) protein is Mitochondrial glycine transporter.